The chain runs to 450 residues: NADP-specific glutamate dehydrogenase (450 aa).

Lysine 111 is a catalytic residue.

It belongs to the Glu/Leu/Phe/Val dehydrogenases family. In terms of assembly, homohexamer.

The catalysed reaction is L-glutamate + NADP(+) + H2O = 2-oxoglutarate + NH4(+) + NADPH + H(+). This is NADP-specific glutamate dehydrogenase (GDHA) from Laccaria bicolor (strain S238N-H82 / ATCC MYA-4686) (Bicoloured deceiver).